Consider the following 213-residue polypeptide: MGNGKEEDYNFVFKVVLIGESGVGKTNLLSRFTRNEFSHDSRTTIGVEFSTRTVLLGTAAVKAQIWDTAGLERYRAITSAYYRGAVGALLVFDLTKHQTYAVVERWLKELYDHAEATIVVMLVGNKSDLSQAREVPTEEARMFAENNGLLFLETSALDSTNVELAFETVLKEIFAKVSKQIQNSPRSNAIALGSAQAGQEPGPGQKRACCINL.

GTP-binding residues include Ser-21, Gly-24, Lys-25, Thr-26, Asn-27, Ser-38, His-39, Thr-43, and Thr-44. Mg(2+) is bound at residue Thr-26. 2 short sequence motifs (switch) span residues 35–49 (NEFS…GVEF) and 67–84 (DTAG…YYRG). Mg(2+) is bound by residues Thr-44 and Asp-67. GTP is bound by residues Gly-70, Asn-125, Lys-126, Asp-128, Ala-156, and Leu-157. 2 S-geranylgeranyl cysteine lipidation sites follow: Cys-209 and Cys-210. Residue Cys-210 is modified to Cysteine methyl ester. The propeptide at 211-213 (INL) is removed in mature form.

This sequence belongs to the small GTPase superfamily. Rab family. As to quaternary structure, interacts (GTP-bound form) with RAB11FIP1, RAB11FIP2, RAB11FIP3 and RAB11FIP4. Interacts (via the hypervariable C-terminal region) with ITGB1 (via the cytoplasmic region); the interaction is GTP-dependent. Interacts with ITGAV. Associates with the integrin alpha-V/beta-1 heterodimer. Interacts with VPS33B. Requires Mg(2+) as cofactor. Expression is restricted to epithelial cells. Expressed in the gastrointestinal mucosa, (highest expression seen in the ileum and colon), kidney, and lung. A very minor and variable level of expression is seen in the splenic tissue.

It is found in the cell membrane. Its subcellular location is the cell projection. The protein localises to the pseudopodium membrane. The protein resides in the cytoplasmic vesicle. It carries out the reaction GTP + H2O = GDP + phosphate + H(+). Its activity is regulated as follows. Regulated by guanine nucleotide exchange factors (GEFs) which promote the exchange of bound GDP for free GTP. Regulated by GTPase activating proteins (GAPs) which increase the GTP hydrolysis activity. Inhibited by GDP dissociation inhibitors (GDIs) which prevent Rab-GDP dissociation. Functionally, the small GTPases Rab are key regulators of intracellular membrane trafficking, from the formation of transport vesicles to their fusion with membranes. Rabs cycle between an inactive GDP-bound form and an active GTP-bound form that is able to recruit to membranes different set of downstream effectors directly responsible for vesicle formation, movement, tethering and fusion. RAB25 regulates epithelial cell differentiation, proliferation and survival, thereby playing key roles in tumorigenesis. Promotes invasive migration of cells in which it functions to localize and maintain integrin alpha-V/beta-1 at the tips of extending pseudopodia. Involved in the regulation of epithelial morphogenesis through the control of CLDN4 expression and localization at tight junctions. May selectively regulate the apical recycling pathway. Together with MYO5B regulates transcytosis. This Oryctolagus cuniculus (Rabbit) protein is Ras-related protein Rab-25 (RAB25).